The following is an 861-amino-acid chain: Linoleate 9S-lipoxygenase 2 (861 aa).

The region spanning 29–160 (NALDFTDLAG…RYKSDRIFFV (132 aa)) is the PLAT domain. Positions 163–861 (PYLPSKTPEL…GKGIPNSVSI (699 aa)) constitute a Lipoxygenase domain. The segment at 212-246 (EGKENVRTTLGGSAEYPYPRRGRTGRPPTRTDPKS) is disordered. 5 residues coordinate Fe cation: His522, His527, His713, Asn717, and Ile861.

Belongs to the lipoxygenase family. Monomer. Fe cation is required as a cofactor. Highly expressed in tubers and roots. Detected in flower buds and leaves.

It is found in the cytoplasm. The enzyme catalyses (9Z,12Z)-octadecadienoate + O2 = (9S)-hydroperoxy-(10E,12Z)-octadecadienoate. It participates in lipid metabolism; oxylipin biosynthesis. Its function is as follows. Plant lipoxygenases may be involved in a number of diverse aspects of plant physiology including growth and development, pest resistance, and senescence or responses to wounding. Catalyzes the hydroperoxidation of lipids containing a cis,cis-1,4-pentadiene structure. Linoleic acid is the preferred substrate, but is also active with linolenic and arachidonic acids. The sequence is that of Linoleate 9S-lipoxygenase 2 (LOX1.2) from Solanum tuberosum (Potato).